The following is a 354-amino-acid chain: MGSGASAEDKELAKRSKELEKKLQEDADKEAKTVKLLLLGAGESGKSTIVKQMKIIHQDGYSPEECLEYKAIIYGNVLQSILAIIRAMPTLGIDYAEVSCVDNGRQLNNLADSIEEGTMPPELVEVIRKLWKDGGVQACFDRAAEYQLNDSASYYLNQLDRITAPDYLPNEQDVLRSRVKTTGIIETKFSVKDLNFRMFDVGGQRSERKKWIHCFEGVTCIIFCAALSAYDMVLVEDDEVNRMHESLHLFNSICNHKFFAATSIVLFLNKKDLFEEKIKKVHLSICFPEYDGNNSYEDAGNYIKSQFLDLNMRKDVKEIYSHMTCATDTQNVKFVFDAVTDIIIKENLKDCGLF.

The disordered stretch occupies residues 1 to 27; the sequence is MGSGASAEDKELAKRSKELEKKLQEDA. Gly-2 is lipidated: N-myristoyl glycine. Residues 7 to 27 show a composition bias toward basic and acidic residues; sequence AEDKELAKRSKELEKKLQEDA. A G-alpha domain is found at 32-354; that stretch reads KTVKLLLLGA…KENLKDCGLF (323 aa). The tract at residues 35–48 is G1 motif; that stretch reads KLLLLGAGESGKST. GTP is bound by residues 40–47, 175–181, 200–204, 269–272, and Ala-326; these read GAGESGKS, LRSRVKT, DVGGQ, and NKKD. Mg(2+)-binding residues include Ser-47 and Thr-181. Residues 173-181 are G2 motif; that stretch reads DVLRSRVKT. The interval 196-205 is G3 motif; that stretch reads FRMFDVGGQR. Positions 265–272 are G4 motif; that stretch reads VLFLNKKD. The interval 324 to 329 is G5 motif; sequence TCATDT.

Belongs to the G-alpha family. G(i/o/t/z) subfamily. As to quaternary structure, g proteins are composed of 3 units; alpha, beta and gamma. The alpha chain contains the guanine nucleotide binding site. Retinal rod outer segment.

The protein resides in the cell projection. The protein localises to the cilium. Its subcellular location is the photoreceptor outer segment. It localises to the photoreceptor inner segment. In terms of biological role, guanine nucleotide-binding proteins (G proteins) are involved as modulators or transducers in various transmembrane signaling systems. Transducin is an amplifier and one of the transducers of a visual impulse that performs the coupling between rhodopsin and cGMP-phosphodiesterase. In Bos taurus (Bovine), this protein is Guanine nucleotide-binding protein G(t) subunit alpha-2 (GNAT2).